The sequence spans 146 residues: Hemoglobin subunit beta-1/2 (146 aa).

V1 carries the post-translational modification N-acetylvaline. Positions 2-146 (HLTGEEKSGL…VANALAHKYH (145 aa)) constitute a Globin domain. Phosphothreonine is present on T12. Residue K59 is modified to N6-acetyllysine. H63 is a binding site for heme b. Position 82 is an N6-acetyllysine (K82). Residue H92 participates in heme b binding. C93 carries the S-nitrosocysteine modification. N6-acetyllysine is present on K144.

The protein belongs to the globin family. In terms of assembly, heterotetramer of two alpha chains and two beta chains. Red blood cells.

In terms of biological role, involved in oxygen transport from the lung to the various peripheral tissues. In Physeter macrocephalus (Sperm whale), this protein is Hemoglobin subunit beta-1/2 (HBB).